The sequence spans 361 residues: uncharacterized protein (361 aa).

Phosphothreonine is present on T12.

Its subcellular location is the cytoplasm. The protein resides in the nucleus. This is an uncharacterized protein from Schizosaccharomyces pombe (strain 972 / ATCC 24843) (Fission yeast).